We begin with the raw amino-acid sequence, 86 residues long: Exodeoxyribonuclease 7 small subunit (86 aa).

Positions 1-27 (MQDELFETEKIPPKNTKNAKNAPKKSF) are disordered.

It belongs to the XseB family. Heterooligomer composed of large and small subunits.

It localises to the cytoplasm. It carries out the reaction Exonucleolytic cleavage in either 5'- to 3'- or 3'- to 5'-direction to yield nucleoside 5'-phosphates.. Functionally, bidirectionally degrades single-stranded DNA into large acid-insoluble oligonucleotides, which are then degraded further into small acid-soluble oligonucleotides. This Helicobacter pylori (strain G27) protein is Exodeoxyribonuclease 7 small subunit.